The chain runs to 244 residues: Geranylgeranylglyceryl phosphate synthase (244 aa).

Positions 21 and 50 each coordinate Mg(2+). Sn-glycerol 1-phosphate is bound by residues 168 to 174 (YLEAGSG), 200 to 201 (GG), and 222 to 223 (GN).

This sequence belongs to the GGGP/HepGP synthase family. Group II subfamily. The cofactor is Mg(2+).

The protein localises to the cytoplasm. The catalysed reaction is sn-glycerol 1-phosphate + (2E,6E,10E)-geranylgeranyl diphosphate = sn-3-O-(geranylgeranyl)glycerol 1-phosphate + diphosphate. Its pathway is membrane lipid metabolism; glycerophospholipid metabolism. Its function is as follows. Prenyltransferase that catalyzes the transfer of the geranylgeranyl moiety of geranylgeranyl diphosphate (GGPP) to the C3 hydroxyl of sn-glycerol-1-phosphate (G1P). This reaction is the first ether-bond-formation step in the biosynthesis of archaeal membrane lipids. The sequence is that of Geranylgeranylglyceryl phosphate synthase from Sulfurisphaera tokodaii (strain DSM 16993 / JCM 10545 / NBRC 100140 / 7) (Sulfolobus tokodaii).